Reading from the N-terminus, the 259-residue chain is Tubulin-specific chaperone C (259 aa).

Residues 112-241 form the C-CAP/cofactor C-like domain; it reads PEVYFENDTL…DEHPILDFTW (130 aa).

The protein belongs to the TBCC family.

It localises to the cytoplasm. The protein localises to the cytoskeleton. In terms of biological role, tubulin-folding protein; involved in the final step of the tubulin folding pathway. In Schizosaccharomyces pombe (strain 972 / ATCC 24843) (Fission yeast), this protein is Tubulin-specific chaperone C (cin2).